The following is a 485-amino-acid chain: tRNA sulfurtransferase (485 aa).

The region spanning 63-167 is the THUMP domain; the sequence is ERYAERLACI…NEHLYLVEKR (105 aa). ATP is bound by residues 185-186, Lys267, Gly289, and Gln298; that span reads LI. Cys346 and Cys458 are joined by a disulfide. Positions 406–484 constitute a Rhodanese domain; that stretch reads VSGGEVVVDI…GYHNVKVYRP (79 aa). Cys458 serves as the catalytic Cysteine persulfide intermediate.

This sequence belongs to the ThiI family.

Its subcellular location is the cytoplasm. The enzyme catalyses [ThiI sulfur-carrier protein]-S-sulfanyl-L-cysteine + a uridine in tRNA + 2 reduced [2Fe-2S]-[ferredoxin] + ATP + H(+) = [ThiI sulfur-carrier protein]-L-cysteine + a 4-thiouridine in tRNA + 2 oxidized [2Fe-2S]-[ferredoxin] + AMP + diphosphate. It catalyses the reaction [ThiS sulfur-carrier protein]-C-terminal Gly-Gly-AMP + S-sulfanyl-L-cysteinyl-[cysteine desulfurase] + AH2 = [ThiS sulfur-carrier protein]-C-terminal-Gly-aminoethanethioate + L-cysteinyl-[cysteine desulfurase] + A + AMP + 2 H(+). It functions in the pathway cofactor biosynthesis; thiamine diphosphate biosynthesis. Catalyzes the ATP-dependent transfer of a sulfur to tRNA to produce 4-thiouridine in position 8 of tRNAs, which functions as a near-UV photosensor. Also catalyzes the transfer of sulfur to the sulfur carrier protein ThiS, forming ThiS-thiocarboxylate. This is a step in the synthesis of thiazole, in the thiamine biosynthesis pathway. The sulfur is donated as persulfide by IscS. The sequence is that of tRNA sulfurtransferase from Shewanella loihica (strain ATCC BAA-1088 / PV-4).